The following is a 425-amino-acid chain: Adenylosuccinate synthetase (425 aa).

GTP is bound by residues 12–18 and 40–42; these read GDEGKAK and GHT. The Proton acceptor role is filled by Asp13. Asp13 and Gly40 together coordinate Mg(2+). IMP contacts are provided by residues 13–16, 38–41, Thr130, Arg144, Gln224, Thr239, and Arg303; these read DEGK and NAGH. Residue His41 is the Proton donor of the active site. Residue 299-305 participates in substrate binding; that stretch reads ATTGRPR. Residues Arg305, 331-333, and 411-413 contribute to the GTP site; these read KID and STG.

This sequence belongs to the adenylosuccinate synthetase family. As to quaternary structure, homodimer. Mg(2+) serves as cofactor.

The protein localises to the cytoplasm. The enzyme catalyses IMP + L-aspartate + GTP = N(6)-(1,2-dicarboxyethyl)-AMP + GDP + phosphate + 2 H(+). The protein operates within purine metabolism; AMP biosynthesis via de novo pathway; AMP from IMP: step 1/2. Its function is as follows. Plays an important role in the de novo pathway of purine nucleotide biosynthesis. Catalyzes the first committed step in the biosynthesis of AMP from IMP. This is Adenylosuccinate synthetase from Leptospira interrogans serogroup Icterohaemorrhagiae serovar copenhageni (strain Fiocruz L1-130).